We begin with the raw amino-acid sequence, 194 residues long: Large ribosomal subunit protein eL15 (194 aa).

A disordered region spans residues 164–194; the sequence is AGRKARGLRRKGRGAEKVRPSLRANFRKKRR. Residues 166–175 are compositionally biased toward basic residues; the sequence is RKARGLRRKG.

This sequence belongs to the eukaryotic ribosomal protein eL15 family.

This Archaeoglobus fulgidus (strain ATCC 49558 / DSM 4304 / JCM 9628 / NBRC 100126 / VC-16) protein is Large ribosomal subunit protein eL15 (rpl15e).